The primary structure comprises 76 residues: DNA-directed RNA polymerase subunit epsilon (76 aa).

The protein belongs to the RNA polymerase subunit epsilon family. RNAP is composed of a core of 2 alpha, a beta and a beta' subunit. The core is associated with a delta subunit, and at least one of epsilon or omega. When a sigma factor is associated with the core the holoenzyme is formed, which can initiate transcription.

The catalysed reaction is RNA(n) + a ribonucleoside 5'-triphosphate = RNA(n+1) + diphosphate. A non-essential component of RNA polymerase (RNAP). This is DNA-directed RNA polymerase subunit epsilon from Streptococcus sanguinis (strain SK36).